The chain runs to 919 residues: Calcium-transporting ATPase type 2C member 1 (919 aa).

Residues 1–70 are Cytoplasmic-facing; sequence MKVARFQKIP…NEFDISEDEP (70 aa). A helical transmembrane segment spans residues 71 to 91; the sequence is LWKKYISQFKNPLIMLLLASA. The Lumenal portion of the chain corresponds to 92-104; sequence VISVLMHQFDDAV. A helical transmembrane segment spans residues 105 to 123; the sequence is SITVAILIVVTVAFVQEYR. Over 124 to 262 the chain is Cytoplasmic; that stretch reads SEKSLEELSK…APKTPLQKSM (139 aa). Residues 263–282 traverse the membrane as a helical segment; sequence DLLGKQLSFYSFGIIGIIML. The Lumenal portion of the chain corresponds to 283-294; the sequence is VGWLLGKDILEM. A helical transmembrane segment spans residues 295-312; that stretch reads FTISVSLAVAAIPEGLPI. Ca(2+)-binding residues include valine 303, alanine 304, isoleucine 306, and glutamate 308. The Cytoplasmic portion of the chain corresponds to 313–699; it reads VVTVTLALGV…EEGKGIYNNI (387 aa). Catalysis depends on aspartate 350, which acts as the 4-aspartylphosphate intermediate. Aspartate 644 and aspartate 648 together coordinate Mg(2+). Residues 700–719 traverse the membrane as a helical segment; the sequence is KNFVRFQLSTSIAALTLISL. Topologically, residues 720–729 are lumenal; that stretch reads ATLMNFPNPL. A helical membrane pass occupies residues 730–750; it reads NAMQILWINIIMDGPPAQSLG. Ca(2+) contacts are provided by asparagine 738 and aspartate 742. The Cytoplasmic portion of the chain corresponds to 751-770; sequence VEPVDKDVIRKPPRNWKDSI. A helical membrane pass occupies residues 771-793; the sequence is LTKNLILKILVSSIIIVCGTLFV. The Lumenal portion of the chain corresponds to 794 to 808; sequence FWRELRDNVITPRDT. A helical membrane pass occupies residues 809-828; sequence TMTFTCFVFFDMFNALSSRS. The Cytoplasmic segment spans residues 829-841; it reads QTKSVFEIGLCSN. The chain crosses the membrane as a helical span at residues 842–860; that stretch reads RMFCYAVLGSIMGQLLVIY. Residues 861-875 are Lumenal-facing; the sequence is FPPLQKVFQTESLSI. A helical membrane pass occupies residues 876 to 896; sequence LDLLFLLGLTSSVCIVAEIIK. At 897 to 919 the chain is on the cytoplasmic side; sequence KVERSREKIQKHVSSTSSSFLEV.

It belongs to the cation transport ATPase (P-type) (TC 3.A.3) family. Type IIA subfamily. Monomer. Homodimer. As to expression, found in most tissues except colon, thymus, spleen and leukocytes. Expressed in keratinocytes (at protein level).

Its subcellular location is the golgi apparatus. It localises to the trans-Golgi network membrane. The protein resides in the golgi stack membrane. The catalysed reaction is Ca(2+)(in) + ATP + H2O = Ca(2+)(out) + ADP + phosphate + H(+). It carries out the reaction Mn(2+)(in) + ATP + H2O = Mn(2+)(out) + ADP + phosphate + H(+). In terms of biological role, ATP-driven pump that supplies the Golgi apparatus with Ca(2+) and Mn(2+) ions, both essential cofactors for processing and trafficking of newly synthesized proteins in the secretory pathway. Within a catalytic cycle, acquires Ca(2+) or Mn(2+) ions on the cytoplasmic side of the membrane and delivers them to the lumenal side. The transfer of ions across the membrane is coupled to ATP hydrolysis and is associated with a transient phosphorylation that shifts the pump conformation from inward-facing to outward-facing state. Plays a primary role in the maintenance of Ca(2+) homeostasis in the trans-Golgi compartment with a functional impact on Golgi and post-Golgi protein sorting as well as a structural impact on cisternae morphology. Responsible for loading the Golgi stores with Ca(2+) ions in keratinocytes, contributing to keratinocyte differentiation and epidermis integrity. Participates in Ca(2+) and Mn(2+) ions uptake into the Golgi store of hippocampal neurons and regulates protein trafficking required for neural polarity. May also play a role in the maintenance of Ca(2+) and Mn(2+) homeostasis and signaling in the cytosol while preventing cytotoxicity. The chain is Calcium-transporting ATPase type 2C member 1 from Homo sapiens (Human).